Reading from the N-terminus, the 270-residue chain is 4-hydroxy-tetrahydrodipicolinate reductase (270 aa).

NAD(+) is bound by residues 9–14 (GSGGRM) and Glu35. Arg36 contacts NADP(+). Residues 99-101 (GTT) and 123-126 (ASNY) each bind NAD(+). The active-site Proton donor/acceptor is the His156. His157 contributes to the (S)-2,3,4,5-tetrahydrodipicolinate binding site. The Proton donor role is filled by Lys160. Position 166–167 (166–167 (GT)) interacts with (S)-2,3,4,5-tetrahydrodipicolinate.

The protein belongs to the DapB family.

The protein resides in the cytoplasm. It carries out the reaction (S)-2,3,4,5-tetrahydrodipicolinate + NAD(+) + H2O = (2S,4S)-4-hydroxy-2,3,4,5-tetrahydrodipicolinate + NADH + H(+). The catalysed reaction is (S)-2,3,4,5-tetrahydrodipicolinate + NADP(+) + H2O = (2S,4S)-4-hydroxy-2,3,4,5-tetrahydrodipicolinate + NADPH + H(+). Its pathway is amino-acid biosynthesis; L-lysine biosynthesis via DAP pathway; (S)-tetrahydrodipicolinate from L-aspartate: step 4/4. In terms of biological role, catalyzes the conversion of 4-hydroxy-tetrahydrodipicolinate (HTPA) to tetrahydrodipicolinate. This is 4-hydroxy-tetrahydrodipicolinate reductase from Histophilus somni (strain 2336) (Haemophilus somnus).